The sequence spans 320 residues: Aspartate carbamoyltransferase catalytic subunit (320 aa).

Residues Arg-57 and Thr-58 each contribute to the carbamoyl phosphate site. Position 85 (Lys-85) interacts with L-aspartate. Carbamoyl phosphate contacts are provided by Arg-107, His-141, and Gln-144. Arg-174 and Arg-228 together coordinate L-aspartate. The carbamoyl phosphate site is built by Gly-269 and Pro-270.

This sequence belongs to the aspartate/ornithine carbamoyltransferase superfamily. ATCase family. As to quaternary structure, heterododecamer (2C3:3R2) of six catalytic PyrB chains organized as two trimers (C3), and six regulatory PyrI chains organized as three dimers (R2).

The enzyme catalyses carbamoyl phosphate + L-aspartate = N-carbamoyl-L-aspartate + phosphate + H(+). Its pathway is pyrimidine metabolism; UMP biosynthesis via de novo pathway; (S)-dihydroorotate from bicarbonate: step 2/3. In terms of biological role, catalyzes the condensation of carbamoyl phosphate and aspartate to form carbamoyl aspartate and inorganic phosphate, the committed step in the de novo pyrimidine nucleotide biosynthesis pathway. This chain is Aspartate carbamoyltransferase catalytic subunit, found in Mycobacterium ulcerans (strain Agy99).